The sequence spans 342 residues: P2Y purinoceptor 12 (342 aa).

Topologically, residues 1 to 27 (MQAVDNLTSAPGNTSLCTRDYKITQVL) are extracellular. N-linked (GlcNAc...) asparagine glycans are attached at residues Asn6 and Asn13. 2 disulfides stabilise this stretch: Cys17/Cys270 and Cys97/Cys175. Residues 28 to 50 (FPLLYTVLFFVGLITNGLAMRIF) form a helical membrane-spanning segment. At 51-61 (FQIRSKSNFII) the chain is on the cytoplasmic side. Ser55 and Ser57 each carry phosphoserine. The helical transmembrane segment at 62-82 (FLKNTVISDLLMILTFPFKIL) threads the bilayer. Over 83–97 (SDAKLGTGPLRTFVC) the chain is Extracellular. The ADP site is built by Arg93, Cys97, and Tyr105. A helical membrane pass occupies residues 98–118 (QVTSVIFYFTMYISISFLGLI). Residues 119–142 (TIDRYQKTTRPFKTSNPKNLLGAK) lie on the Cytoplasmic side of the membrane. Residues 143-162 (ILSVVIWAFMFLLSLPNMIL) form a helical membrane-spanning segment. ADP contacts are provided by residues 156 to 159 (SLPN), 175 to 179 (CSFLK), His187, and Asn191. At 163–185 (TNRQPRDKNVKKCSFLKSEFGLV) the chain is on the extracellular side. Residues 186–207 (WHEIVNYICQVIFWINFLIVIV) form a helical membrane-spanning segment. The Cytoplasmic portion of the chain corresponds to 208 to 233 (CYTLITKELYRSYVRTRGVGKVPRKK). Residues 234-259 (VNVKVFIIIAVFFICFVPFHFARIPY) form a helical membrane-spanning segment. Residues 256–259 (RIPY), Gln263, and Lys280 contribute to the ADP site. The Extracellular portion of the chain corresponds to 260–278 (TLSQTRDVFDCTAENTLFY). The chain crosses the membrane as a helical span at residues 279-298 (VKESTLWLTSLNACLDPFIY). Residues 299-342 (FFLCKSFRNSLISMLKCPNSATSLSQDNRKKEQDGGDPNEETPM) are Cytoplasmic-facing. Residues 319–342 (ATSLSQDNRKKEQDGGDPNEETPM) form a disordered region. The segment covering 333–342 (GGDPNEETPM) has biased composition (acidic residues).

It belongs to the G-protein coupled receptor 1 family. In terms of tissue distribution, highly expressed in the platelets, lower levels in the brain. Lowest levels in the lung, appendix, pituitary and adrenal gland. Expressed in the spinal cord and in the fetal brain.

Its subcellular location is the cell membrane. Its function is as follows. Receptor for ADP and ATP coupled to G-proteins that inhibit the adenylyl cyclase second messenger system. Not activated by UDP and UTP. Required for normal platelet aggregation and blood coagulation. The polypeptide is P2Y purinoceptor 12 (P2RY12) (Homo sapiens (Human)).